Reading from the N-terminus, the 606-residue chain is Putative auxin response factor 21 (606 aa).

A DNA-binding region (TF-B3) is located at residues 126 to 228; it reads FTKVLTASDT…ELRVGIRRAR (103 aa). One can recognise a PB1 domain in the interval 511-592; that stretch reads RTCTKVQMQG…MVKKILIYSK (82 aa).

Belongs to the ARF family. Homodimers and heterodimers.

The protein resides in the nucleus. Auxin response factors (ARFs) are transcriptional factors that bind specifically to the DNA sequence 5'-TGTCTC-3' found in the auxin-responsive promoter elements (AuxREs). Could act as transcriptional activator or repressor. Formation of heterodimers with Aux/IAA proteins may alter their ability to modulate early auxin response genes expression. The protein is Putative auxin response factor 21 (ARF21) of Arabidopsis thaliana (Mouse-ear cress).